Reading from the N-terminus, the 189-residue chain is GTP cyclohydrolase 1 (189 aa).

Zn(2+) is bound by residues C78, H81, and C150.

It belongs to the GTP cyclohydrolase I family. As to quaternary structure, homomer.

The catalysed reaction is GTP + H2O = 7,8-dihydroneopterin 3'-triphosphate + formate + H(+). It participates in cofactor biosynthesis; 7,8-dihydroneopterin triphosphate biosynthesis; 7,8-dihydroneopterin triphosphate from GTP: step 1/1. This Listeria monocytogenes serotype 4a (strain HCC23) protein is GTP cyclohydrolase 1.